We begin with the raw amino-acid sequence, 201 residues long: Small ribosomal subunit protein uS4c (201 aa).

The tract at residues 15–43 (LGALPGLTNKRPRAGSDLRNQSRSGKKSQ) is disordered. The 64-residue stretch at 89-152 (MRLDNILFRL…NSRTLIQNSL (64 aa)) folds into the S4 RNA-binding domain.

Belongs to the universal ribosomal protein uS4 family. In terms of assembly, part of the 30S ribosomal subunit. Contacts protein S5. The interaction surface between S4 and S5 is involved in control of translational fidelity.

It is found in the plastid. The protein resides in the chloroplast. Its function is as follows. One of the primary rRNA binding proteins, it binds directly to 16S rRNA where it nucleates assembly of the body of the 30S subunit. Functionally, with S5 and S12 plays an important role in translational accuracy. The chain is Small ribosomal subunit protein uS4c (rps4) from Panax ginseng (Korean ginseng).